A 415-amino-acid polypeptide reads, in one-letter code: Gamma-glutamyl phosphate reductase (415 aa).

This sequence belongs to the gamma-glutamyl phosphate reductase family.

The protein localises to the cytoplasm. The enzyme catalyses L-glutamate 5-semialdehyde + phosphate + NADP(+) = L-glutamyl 5-phosphate + NADPH + H(+). It functions in the pathway amino-acid biosynthesis; L-proline biosynthesis; L-glutamate 5-semialdehyde from L-glutamate: step 2/2. Functionally, catalyzes the NADPH-dependent reduction of L-glutamate 5-phosphate into L-glutamate 5-semialdehyde and phosphate. The product spontaneously undergoes cyclization to form 1-pyrroline-5-carboxylate. The protein is Gamma-glutamyl phosphate reductase of Salmonella dublin (strain CT_02021853).